Reading from the N-terminus, the 366-residue chain is Phospho-N-acetylmuramoyl-pentapeptide-transferase (366 aa).

Helical transmembrane passes span 27-47 (AALF…INSL), 71-91 (TPTM…LLWA), 93-113 (LSNV…AIGF), 138-158 (FVIA…SGIA), 174-194 (FMIN…VGAG), 205-225 (GLAI…AYLA), 245-265 (LAVV…FNAP), 268-288 (AIFM…TVAV), 294-314 (IVMA…IIQV), and 343-363 (QVVI…LSTL).

It belongs to the glycosyltransferase 4 family. MraY subfamily. Mg(2+) is required as a cofactor.

It localises to the cell inner membrane. The enzyme catalyses UDP-N-acetyl-alpha-D-muramoyl-L-alanyl-gamma-D-glutamyl-meso-2,6-diaminopimeloyl-D-alanyl-D-alanine + di-trans,octa-cis-undecaprenyl phosphate = di-trans,octa-cis-undecaprenyl diphospho-N-acetyl-alpha-D-muramoyl-L-alanyl-D-glutamyl-meso-2,6-diaminopimeloyl-D-alanyl-D-alanine + UMP. The protein operates within cell wall biogenesis; peptidoglycan biosynthesis. In terms of biological role, catalyzes the initial step of the lipid cycle reactions in the biosynthesis of the cell wall peptidoglycan: transfers peptidoglycan precursor phospho-MurNAc-pentapeptide from UDP-MurNAc-pentapeptide onto the lipid carrier undecaprenyl phosphate, yielding undecaprenyl-pyrophosphoryl-MurNAc-pentapeptide, known as lipid I. The polypeptide is Phospho-N-acetylmuramoyl-pentapeptide-transferase (Rhizobium johnstonii (strain DSM 114642 / LMG 32736 / 3841) (Rhizobium leguminosarum bv. viciae)).